The sequence spans 931 residues: Protocadherin gamma-A4 (931 aa).

The signal sequence occupies residues 1–28 (MAAPPARPDHTRLLHICLLLGVLVEIRA). Cadherin domains follow at residues 29–133 (EQIR…PPSF), 134–242 (GTEQ…APVF), 243–347 (TQPE…APEV), 348–452 (TVTS…PPTF), 453–567 (PHAS…YPTF), and 570–682 (DDST…KPSA). Over 29-692 (EQIRYSVFEE…DPDDSGLTLY (664 aa)) the chain is Extracellular. 2 N-linked (GlcNAc...) asparagine glycosylation sites follow: N419 and N545. A helical membrane pass occupies residues 693–713 (LVVSVAAVSCVFLAFVTVLLA). Over 714 to 931 (LKLRRWHKSR…KKKSGKKEKK (218 aa)) the chain is Cytoplasmic. Disordered regions lie at residues 801–840 (KGDP…WPNN) and 901–931 (ATLT…KEKK). A compositionally biased stretch (polar residues) spans 805–840 (NLQQAPPNTDWRFSQAQRPGTSGSQNGDDTGTWPNN). Residues 921-931 (NKKKSGKKEKK) show a composition bias toward basic residues.

It localises to the cell membrane. Functionally, potential calcium-dependent cell-adhesion protein. May be involved in the establishment and maintenance of specific neuronal connections in the brain. In Pan troglodytes (Chimpanzee), this protein is Protocadherin gamma-A4 (PCDHGA4).